The sequence spans 195 residues: Sec-independent protein translocase protein TatB (195 aa).

Residues 2–22 traverse the membrane as a helical segment; it reads FSNVGWGEVLVLLIVALFLIG. Residues 103–125 are compositionally biased toward basic and acidic residues; the sequence is VKDTVDTVRKPNLRESLKADKTK. The segment at 103–195 is disordered; it reads VKDTVDTVRK…APGYGWEDVT (93 aa). 2 stretches are compositionally biased toward polar residues: residues 127-139 and 146-155; these read SAQP…SGSA and VTQQSNAGES.

The protein belongs to the TatB family. As to quaternary structure, the Tat system comprises two distinct complexes: a TatABC complex, containing multiple copies of TatA, TatB and TatC subunits, and a separate TatA complex, containing only TatA subunits. Substrates initially bind to the TatABC complex, which probably triggers association of the separate TatA complex to form the active translocon.

It localises to the cell membrane. Part of the twin-arginine translocation (Tat) system that transports large folded proteins containing a characteristic twin-arginine motif in their signal peptide across membranes. Together with TatC, TatB is part of a receptor directly interacting with Tat signal peptides. TatB may form an oligomeric binding site that transiently accommodates folded Tat precursor proteins before their translocation. The sequence is that of Sec-independent protein translocase protein TatB from Corynebacterium jeikeium (strain K411).